We begin with the raw amino-acid sequence, 773 residues long: 3-isopropylmalate dehydratase (773 aa).

Residues cysteine 355, cysteine 415, and cysteine 418 each coordinate [4Fe-4S] cluster.

Belongs to the aconitase/IPM isomerase family. In terms of assembly, monomer. [4Fe-4S] cluster is required as a cofactor.

The catalysed reaction is (2R,3S)-3-isopropylmalate = (2S)-2-isopropylmalate. It participates in amino-acid biosynthesis; L-leucine biosynthesis; L-leucine from 3-methyl-2-oxobutanoate: step 2/4. In terms of biological role, catalyzes the isomerization between 2-isopropylmalate and 3-isopropylmalate, via the formation of 2-isopropylmaleate. In Mycosarcoma maydis (Corn smut fungus), this protein is 3-isopropylmalate dehydratase (LEU1).